A 386-amino-acid chain; its full sequence is Vacuolar protein-sorting-associated protein 36 (386 aa).

Residues 1–88 form the GLUE N-terminal domain; the sequence is MDRFVWTSGL…SAKIVVHLHP (88 aa). In terms of domain architecture, GLUE C-terminal spans 105-138; sequence YIKLSFKEHGQIEFYRRLSEEMTQRRWETVPVSQ. Positions 160-185 form a coiled coil; that stretch reads ERKLEEKRKETDKNISEAFEDLSKLM.

The protein belongs to the VPS36 family. As to quaternary structure, component of a complex at least composed of ELL, SNF8/EAP30, VPS25/EAP20 and VPS36/EAP45. Component of the endosomal sorting complex required for transport II (ESCRT-II), composed of SNF8, VPS36 and two copies of VPS25. Interacts with VPS25, SNF8, TSG101 and CHMP6. Interacts (via GLUE domain) with ubiquitin. Interacts with RILPL1 (via the C-terminal domain); which recruits ESCRT-II to the endosome membranes. Interacts with ECPAS.

Its subcellular location is the cytoplasm. The protein localises to the endosome. It localises to the late endosome. It is found in the membrane. The protein resides in the nucleus. Functionally, component of the ESCRT-II complex (endosomal sorting complex required for transport II), which is required for multivesicular body (MVB) formation and sorting of endosomal cargo proteins into MVBs. The MVB pathway mediates delivery of transmembrane proteins into the lumen of the lysosome for degradation. The ESCRT-II complex is probably involved in the recruitment of the ESCRT-III complex. Its ability to bind ubiquitin probably plays a role in endosomal sorting of ubiquitinated cargo proteins by ESCRT complexes. The ESCRT-II complex may also play a role in transcription regulation, possibly via its interaction with ELL. Binds phosphoinosides such as PtdIns(3,4,5)P3. This chain is Vacuolar protein-sorting-associated protein 36 (Vps36), found in Rattus norvegicus (Rat).